Consider the following 414-residue polypeptide: Enterobactin exporter EntS (414 aa).

Over 1-21 (MNRQSWLLNLSLLKTHPAFRA) the chain is Cytoplasmic. The chain crosses the membrane as a helical span at residues 22–42 (VFLARFISIVSLGLLGVAVPV). Over 43–55 (QIQMMTHSTWQVG) the chain is Periplasmic. The helical transmembrane segment at 56 to 76 (LSVTLTGGAMFIGLMVGGVLA) threads the bilayer. At 77–83 (DRYERKK) the chain is on the cytoplasmic side. A helical membrane pass occupies residues 84 to 104 (VILLARGTCGIGFIGLCVNSL). Topologically, residues 105 to 109 (LPEPS) are periplasmic. Residues 110–130 (LLAIYLLGLWDGFFASLGVTA) form a helical membrane-spanning segment. Residues 131–156 (LLAATPALVGRENLMQAGAITMLTVR) lie on the Cytoplasmic side of the membrane. Residues 157-177 (LGSVISPMLGGILLASGGVAW) traverse the membrane as a helical segment. Residue asparagine 178 is a topological domain, periplasmic. The helical transmembrane segment at 179–199 (YGLAAAGTFITLLPLLTLPRL) threads the bilayer. At 200 to 218 (PVPPQPRENPFIALLAAFR) the chain is on the cytoplasmic side. The chain crosses the membrane as a helical span at residues 219–239 (FLLASPLIGGIALLGGLVTMA). Over 240-256 (SAVRVLYPALAMSWQMS) the chain is Periplasmic. A helical membrane pass occupies residues 257-277 (AAQIGLLYAAIPLGAAIGALT). Topologically, residues 278 to 287 (SGQLAHSVRP) are cytoplasmic. The chain crosses the membrane as a helical span at residues 288 to 307 (GLIMLVSTVGSFLAVGLFAI). Topologically, residues 308-313 (MPVWTA) are periplasmic. Residues 314-336 (GVICLALFGWLSAISSLLQYTLL) traverse the membrane as a helical segment. Topologically, residues 337–356 (QTQTPENMLGRMNGLWTAQN) are cytoplasmic. A helical transmembrane segment spans residues 357-377 (VTGDAIGAALLGGLGAMMTPV). A topological domain (periplasmic) is located at residue alanine 378. The chain crosses the membrane as a helical span at residues 379–399 (SASVSGFGLVIIGLLLLLVLG). Topologically, residues 400–414 (ELRRFRQTPPVSDAG) are cytoplasmic.

It belongs to the major facilitator superfamily. EntS (TC 2.A.1.38) family.

It localises to the cell inner membrane. Its function is as follows. Component of an export pathway for enterobactin. The polypeptide is Enterobactin exporter EntS (Salmonella choleraesuis (strain SC-B67)).